The primary structure comprises 563 residues: Mitochondrial distribution and morphology protein 34 (563 aa).

Positions 1-195 (MAFNFNWSPL…LPAIIHRLSL (195 aa)) constitute an SMP-LTD domain. Disordered stretches follow at residues 298 to 499 (ERGD…PHTP) and 531 to 563 (ARRQ…PKAL). Polar residues-rich tracts occupy residues 303-332 (AGTT…FSNR) and 346-357 (SLVNMNSATTGL). A compositionally biased stretch (basic residues) spans 365-383 (SRSHPTRKKKNRVVNLRKP). The segment covering 386–407 (TESSESGESETASTTAVSEPTV) has biased composition (low complexity). Polar residues-rich tracts occupy residues 458 to 471 (PSLT…INTQ) and 478 to 488 (YNQSASTSYTP). Over residues 531-540 (ARRQHDDKTA) the composition is skewed to basic and acidic residues.

It belongs to the MDM34 family. As to quaternary structure, component of the ER-mitochondria encounter structure (ERMES) or MDM complex, composed of MMM1, MDM10, MDM12 and MDM34.

Its subcellular location is the mitochondrion outer membrane. Functionally, component of the ERMES/MDM complex, which serves as a molecular tether to connect the endoplasmic reticulum (ER) and mitochondria. Components of this complex are involved in the control of mitochondrial shape and protein biogenesis, and function in nonvesicular lipid trafficking between the ER and mitochondria. MDM34 is required for the interaction of the ER-resident membrane protein MMM1 and the outer mitochondrial membrane-resident beta-barrel protein MDM10. The chain is Mitochondrial distribution and morphology protein 34 from Botryotinia fuckeliana (strain B05.10) (Noble rot fungus).